Consider the following 307-residue polypeptide: Mitochondrial brown fat uncoupling protein 1 (307 aa).

Topologically, residues 2–10 are mitochondrial intermembrane; the sequence is VNPTTSEVH. Residues 11–32 traverse the membrane as a helical segment; it reads PTMGVKIFSAGVAACLADIITF. Solcar repeat units lie at residues 11–102, 111–201, and 210–295; these read PTMG…VQEY, PTLG…MKGA, and DDVP…LKKE. Residues 33–73 lie on the Mitochondrial matrix side of the membrane; sequence PLDTAKVRLQIQGEGQISSTIRYKGVLGTITTLAKTEGLPK. K56 contacts fatty acid 16:0. A helical membrane pass occupies residues 74–96; the sequence is LYSGLPAGIQRQISFASLRIGLY. Residues 97 to 116 are Mitochondrial intermembrane-facing; the sequence is DTVQEYFSSGKETPPTLGNR. Residues 117-133 form a helical membrane-spanning segment; that stretch reads ISAGLMTGGVAVFIGQP. Residues 134–178 are Mitochondrial matrix-facing; it reads TEVVKVRLQAQSHLHGIKPRYTGTYNAYRIIATTESFSTLWKGTT. A helical transmembrane segment spans residues 179–195; sequence PNLLRNVIINCVELVTY. Residues 196 to 212 are Mitochondrial intermembrane-facing; that stretch reads DLMKGALVNNQILADDV. A helical membrane pass occupies residues 213–232; that stretch reads PCHLLSAFVAGFCTTFLASP. Residues 233–266 lie on the Mitochondrial matrix side of the membrane; it reads ADVVKTRFINSLPGQYPSVPSCAMTMLTKEGPTA. Cysteine sulfenic acid (-SOH) is present on C254. Residues 267–289 form a helical membrane-spanning segment; that stretch reads FFKGFVPSFLRLASWNVIMFVCF. Fatty acid 16:0 is bound at residue K269. At 290 to 307 the chain is on the mitochondrial intermembrane side; sequence EQLKKELSKSRQTVDCTT.

It belongs to the mitochondrial carrier (TC 2.A.29) family. As to quaternary structure, most probably functions as a monomer. Binds one purine nucleotide per monomer. However, has also been suggested to function as a homodimer or a homotetramer. Tightly associates with cardiolipin in the mitochondrion inner membrane; may stabilize and regulate its activity. Post-translationally, may undergo sulfenylation upon cold exposure. May increase the sensitivity of UCP1 thermogenic function to the activation by noradrenaline probably through structural effects. May undergo ubiquitin-mediated proteasomal degradation. In terms of tissue distribution, brown adipose tissue.

The protein localises to the mitochondrion inner membrane. It carries out the reaction H(+)(in) = H(+)(out). Has no constitutive proton transporter activity and has to be activated by long-chain fatty acids/LCFAs. Inhibited by purine nucleotides. Both purine nucleotides and LCFAs bind the cytosolic side of the transporter and directly compete to activate or inhibit it. Activated by noradrenaline and reactive oxygen species. Despite lacking canonical translational encoding for selenocysteine, a small pool of the protein has been observed to selectively incorporate selenocysteine at 'Cys-254'. Selenocysteine-modified protein is highly sensitive to redox modification and may constitute a pool of protein highly sensitive to activation by elevated levels of reactive oxygen species (ROS). In terms of biological role, mitochondrial protein responsible for thermogenic respiration, a specialized capacity of brown adipose tissue and beige fat that participates in non-shivering adaptive thermogenesis to temperature and diet variations and more generally to the regulation of energy balance. Functions as a long-chain fatty acid/LCFA and proton symporter, simultaneously transporting one LCFA and one proton through the inner mitochondrial membrane. However, LCFAs remaining associated with the transporter via their hydrophobic tails, it results in an apparent transport of protons activated by LCFAs. Thereby, dissipates the mitochondrial proton gradient and converts the energy of substrate oxydation into heat instead of ATP. Regulates the production of reactive oxygen species/ROS by mitochondria. This chain is Mitochondrial brown fat uncoupling protein 1, found in Mesocricetus auratus (Golden hamster).